Reading from the N-terminus, the 390-residue chain is GTPase Obg (390 aa).

Residues 1–159 (MKFVDEASIL…RELLLELMLL (159 aa)) enclose the Obg domain. The disordered stretch occupies residues 127–147 (NTRFKSSVNRTPRQKTNGTPG). Residues 129-145 (RFKSSVNRTPRQKTNGT) show a composition bias toward polar residues. Positions 160 to 333 (ADVGMLGMPN…LCWDVMTFII (174 aa)) constitute an OBG-type G domain. GTP-binding positions include 166-173 (GMPNAGKS), 191-195 (FTTLV), 213-216 (DIPG), 283-286 (NKID), and 314-316 (SAA). 2 residues coordinate Mg(2+): Ser-173 and Thr-193.

Belongs to the TRAFAC class OBG-HflX-like GTPase superfamily. OBG GTPase family. In terms of assembly, monomer. Requires Mg(2+) as cofactor.

The protein localises to the cytoplasm. An essential GTPase which binds GTP, GDP and possibly (p)ppGpp with moderate affinity, with high nucleotide exchange rates and a fairly low GTP hydrolysis rate. Plays a role in control of the cell cycle, stress response, ribosome biogenesis and in those bacteria that undergo differentiation, in morphogenesis control. The polypeptide is GTPase Obg (Escherichia coli O157:H7).